The following is a 562-amino-acid chain: NAD-dependent malic enzyme (562 aa).

Residue Y101 is the Proton donor of the active site. R154 contributes to the NAD(+) binding site. K172 acts as the Proton acceptor in catalysis. A divalent metal cation contacts are provided by E243, D244, and D267. 2 residues coordinate NAD(+): D267 and N415.

The protein belongs to the malic enzymes family. Homotetramer. Requires Mg(2+) as cofactor. Mn(2+) serves as cofactor.

It catalyses the reaction (S)-malate + NAD(+) = pyruvate + CO2 + NADH. The catalysed reaction is oxaloacetate + H(+) = pyruvate + CO2. This is NAD-dependent malic enzyme from Shewanella baltica (strain OS155 / ATCC BAA-1091).